A 181-amino-acid chain; its full sequence is Bifunctional protein PyrR (181 aa).

Positions Val-101–Thr-113 match the PRPP-binding motif.

Belongs to the purine/pyrimidine phosphoribosyltransferase family. PyrR subfamily. Homodimer and homohexamer; in equilibrium.

The catalysed reaction is UMP + diphosphate = 5-phospho-alpha-D-ribose 1-diphosphate + uracil. In terms of biological role, regulates transcriptional attenuation of the pyrimidine nucleotide (pyr) operon by binding in a uridine-dependent manner to specific sites on pyr mRNA. This disrupts an antiterminator hairpin in the RNA and favors formation of a downstream transcription terminator, leading to a reduced expression of downstream genes. Also displays a weak uracil phosphoribosyltransferase activity which is not physiologically significant. In Bacillus velezensis (strain DSM 23117 / BGSC 10A6 / LMG 26770 / FZB42) (Bacillus amyloliquefaciens subsp. plantarum), this protein is Bifunctional protein PyrR.